The primary structure comprises 298 residues: Protoheme IX farnesyltransferase (298 aa).

9 consecutive transmembrane segments (helical) span residues 26-46, 52-72, 93-113, 120-140, 148-168, 174-194, 219-239, 241-261, and 278-298; these read VVSLIVFTAVIGMFLSVPGAV, LLGTIGISLVAGAAAALNCLV, VSVPETLFFLVMVGGLGLFIL, LTMWLTLGTFVGYAIIYTVIL, IVIGGASGAMPPVLGWAAITG, ALLLFLIIFAWTPPHFWALAL, LHVLLYTIILCIATVLPYLTQ, SGLIYLVSVLILDAIFLYYAI, and YSIIYLALLFTALLVDHYFYF.

It belongs to the UbiA prenyltransferase family. Protoheme IX farnesyltransferase subfamily.

Its subcellular location is the cell inner membrane. The enzyme catalyses heme b + (2E,6E)-farnesyl diphosphate + H2O = Fe(II)-heme o + diphosphate. It participates in porphyrin-containing compound metabolism; heme O biosynthesis; heme O from protoheme: step 1/1. Converts heme B (protoheme IX) to heme O by substitution of the vinyl group on carbon 2 of heme B porphyrin ring with a hydroxyethyl farnesyl side group. This chain is Protoheme IX farnesyltransferase, found in Nitrosomonas eutropha (strain DSM 101675 / C91 / Nm57).